Here is a 551-residue protein sequence, read N- to C-terminus: Glucans biosynthesis protein D (551 aa).

Positions 1–32 (MNRRRFIKGSMAMAAVCGSSGIASLFSQAAFA) form a signal peptide, tat-type signal.

It belongs to the OpgD/OpgG family. In terms of processing, predicted to be exported by the Tat system. The position of the signal peptide cleavage has not been experimentally proven.

The protein resides in the periplasm. It participates in glycan metabolism; osmoregulated periplasmic glucan (OPG) biosynthesis. Its function is as follows. Probably involved in the control of the structural glucose backbone of osmoregulated periplasmic glucans (OPGs). The protein is Glucans biosynthesis protein D (mdoD) of Salmonella typhimurium (strain LT2 / SGSC1412 / ATCC 700720).